The chain runs to 875 residues: Neurotrypsin (875 aa).

An N-terminal signal peptide occupies residues 1–20 (MTLARFALALLFGVLPEVVG). Asn26 is a glycosylation site (N-linked (GlcNAc...) asparagine). Residues 51–72 (QRHRRTRPPPPLPRFPRPPRAL) are disordered. Residues 58-71 (PPPPLPRFPRPPRA) are compositionally biased toward pro residues. The Kringle domain maps to 93–165 (CPAGEPWVSV…GKVDWGYCDC (73 aa)). 20 disulfides stabilise this stretch: Cys93-Cys165, Cys109-Cys149, Cys138-Cys163, Cys195-Cys259, Cys208-Cys269, Cys239-Cys249, Cys305-Cys369, Cys318-Cys379, Cys349-Cys359, Cys412-Cys475, Cys425-Cys485, Cys455-Cys465, Cys525-Cys589, Cys538-Cys599, Cys569-Cys579, Cys619-Cys750, Cys661-Cys677, Cys765-Cys831, Cys794-Cys808, and Cys821-Cys850. SRCR domains are found at residues 170–271 (VRLR…MCSF), 280–381 (IRLV…SCTP), 387–487 (IRLA…ACYP), and 500–601 (VRLM…ICDY). Residues 619-630 (CGLRLLHRRQKR) form a zymogen activation region region. The region spanning 631-874 (IIGGKNSLRG…FVPWIKSVTK (244 aa)) is the Peptidase S1 domain. His676 serves as the catalytic Charge relay system. Asn683 carries N-linked (GlcNAc...) asparagine glycosylation. Asp726 functions as the Charge relay system in the catalytic mechanism. Residue Ser825 is the Charge relay system of the active site.

This sequence belongs to the peptidase S1 family.

It is found in the secreted. Its function is as follows. Plays a role in neuronal plasticity and the proteolytic action may subserve structural reorganizations associated with learning and memory operations. This Saguinus labiatus (Red-chested mustached tamarin) protein is Neurotrypsin (PRSS12).